The sequence spans 215 residues: Ras-related protein Rab-5A (215 aa).

Ser-29, Ala-30, Gly-32, Lys-33, Ser-34, Ser-35, His-46, Glu-47, Thr-52, and Gly-78 together coordinate GTP. Position 34 (Ser-34) interacts with Mg(2+). Short sequence motifs (switch) lie at residues 44–56 (QFHE…IGAA) and 77–93 (AGQE…YRGA). Thr-52 lines the Mg(2+) pocket. Position 84 is a phosphoserine (Ser-84). Positions 133, 134, 136, 164, and 165 each coordinate GTP. The disordered stretch occupies residues 185-215 (EPQNPGINCTRGRGVDLTEPTQPTRSQCCSN). Residues 203 to 215 (EPTQPTRSQCCSN) are compositionally biased toward polar residues. Residues Cys-212 and Cys-213 are each lipidated (S-geranylgeranyl cysteine).

This sequence belongs to the small GTPase superfamily. Rab family. Interacts with GDI1; this promotes dissociation from membranes; phosphorylation at Ser-84 disrupts this interaction. Interacts with GDI2; phosphorylation at Ser-84 disrupts the interaction. Interacts with SGSM1 and SGSM3. Interacts with PIK3CB. Interacts with RIN1 and GAPVD1, which regulate its pathway, probably by acting as a GEF. Interacts with RINL. Interacts with ALS2CL, SUN2, ZFYVE20 and RUFY1. Interacts with RABEP1; one RABEP1 homodimer binds two RAB5A chains, but at opposite sides of the dimer. Interacts with OCRL and INPP5F. May be a component of a complex composed of RAB5A, DYN2 and PIK3C3. Does not interact with the BLOC-3 complex (heterodimer of HPS1 and HPS4). Interacts with CLN5. Interacts with APPL2. Interacts with F8A1/F8A2/F8A3. Found in a complex with F8A1/F8A2/F8A3, HTT and RAB5A; mediates the recruitment of HTT by RAB5A onto early endosomes. Interacts with ATP9A. Interacts with PPP1R21; mediates the recruitment of FERRY complex by RAB5A onto early endosomes. Requires Mg(2+) as cofactor. Phosphorylation of Ser-84 in the switch II region by LRRK2 prevents the association of RAB regulatory proteins, including RAB GDP dissociation inhibitors GDI1 and GDI2.

Its subcellular location is the cell membrane. It localises to the early endosome membrane. The protein resides in the melanosome. It is found in the cytoplasmic vesicle. The protein localises to the cell projection. Its subcellular location is the ruffle. It localises to the membrane. The protein resides in the cytoplasm. It is found in the cytosol. The protein localises to the phagosome membrane. Its subcellular location is the endosome membrane. The enzyme catalyses GTP + H2O = GDP + phosphate + H(+). Its activity is regulated as follows. Regulated by guanine nucleotide exchange factors (GEFs) including RINL, which promote the exchange of bound GDP for free GTP. Regulated by GTPase activating proteins (GAPs) which increase the GTP hydrolysis activity. Inhibited by GDP dissociation inhibitors (GDIs). The small GTPases Rab are key regulators of intracellular membrane trafficking, from the formation of transport vesicles to their fusion with membranes. Rabs cycle between an inactive GDP-bound form and an active GTP-bound form that is able to recruit to membranes different sets of downstream effectors directly responsible for vesicle formation, movement, tethering and fusion. RAB5A is required for the fusion of plasma membranes and early endosomes. Contributes to the regulation of filopodia extension. Required for the exosomal release of SDCBP, CD63, PDCD6IP and syndecan. Regulates maturation of apoptotic cell-containing phagosomes, probably downstream of DYN2 and PIK3C3. This is Ras-related protein Rab-5A (RAB5A) from Sus scrofa (Pig).